A 218-amino-acid polypeptide reads, in one-letter code: Protein-L-isoaspartate O-methyltransferase (218 aa).

Ser63 is an active-site residue.

Belongs to the methyltransferase superfamily. L-isoaspartyl/D-aspartyl protein methyltransferase family.

It localises to the cytoplasm. It carries out the reaction [protein]-L-isoaspartate + S-adenosyl-L-methionine = [protein]-L-isoaspartate alpha-methyl ester + S-adenosyl-L-homocysteine. Its function is as follows. Catalyzes the methyl esterification of L-isoaspartyl residues in peptides and proteins that result from spontaneous decomposition of normal L-aspartyl and L-asparaginyl residues. It plays a role in the repair and/or degradation of damaged proteins. The polypeptide is Protein-L-isoaspartate O-methyltransferase (Syntrophus aciditrophicus (strain SB)).